We begin with the raw amino-acid sequence, 273 residues long: 2,3,4,5-tetrahydropyridine-2,6-dicarboxylate N-succinyltransferase (273 aa).

Substrate is bound by residues Arg104 and Asp141.

The protein belongs to the transferase hexapeptide repeat family. As to quaternary structure, homotrimer.

Its subcellular location is the cytoplasm. It carries out the reaction (S)-2,3,4,5-tetrahydrodipicolinate + succinyl-CoA + H2O = (S)-2-succinylamino-6-oxoheptanedioate + CoA. It participates in amino-acid biosynthesis; L-lysine biosynthesis via DAP pathway; LL-2,6-diaminopimelate from (S)-tetrahydrodipicolinate (succinylase route): step 1/3. The chain is 2,3,4,5-tetrahydropyridine-2,6-dicarboxylate N-succinyltransferase from Chromobacterium violaceum (strain ATCC 12472 / DSM 30191 / JCM 1249 / CCUG 213 / NBRC 12614 / NCIMB 9131 / NCTC 9757 / MK).